Here is a 683-residue protein sequence, read N- to C-terminus: E3 ubiquitin-protein ligase RNF103 (683 aa).

The next 4 helical transmembrane spans lie at 6-26 (FFLLLYFLVLFVLARFFEAIV), 326-346 (LFVLSLVLVNLMAWMDLFITQ), 366-386 (LLIISWLPVLGFLQLPYLDSF), and 411-431 (MFYTSHPALFLSTYLGHGLLI). A compositionally biased stretch (acidic residues) spans 525–542 (EEMSESSQDTENDSDSDN). The interval 525–548 (EEMSESSQDTENDSDSDNMDTFSS) is disordered. The RING-type zinc-finger motif lies at 619 to 661 (CVVCLENFENGCLLMGLPCGHVFHQNCIVMWLAGGRHCCPVCR).

As to quaternary structure, interacts with DERL1 and VCP. In terms of tissue distribution, highly expressed in the normal cerebellum but not in the cerebral cortex.

The protein localises to the endoplasmic reticulum membrane. It catalyses the reaction S-ubiquitinyl-[E2 ubiquitin-conjugating enzyme]-L-cysteine + [acceptor protein]-L-lysine = [E2 ubiquitin-conjugating enzyme]-L-cysteine + N(6)-ubiquitinyl-[acceptor protein]-L-lysine.. The protein operates within protein modification; protein ubiquitination. Acts as an E2-dependent E3 ubiquitin-protein ligase, probably involved in the ER-associated protein degradation pathway. This is E3 ubiquitin-protein ligase RNF103 (Rnf103) from Mus musculus (Mouse).